The primary structure comprises 317 residues: Epidermal growth factor-like protein (317 aa).

The first 23 residues, 1–23 (MDFKIFLFLTAIFMIVGVTVSTA), serve as a signal peptide directing secretion. The segment at 24-33 (TTNPTAPRAY) is may be required for E.coli agglutination activity. EGF-like domains follow at residues 93-128 (HCTP…GKCI), 130-161 (VCPG…RYCT), 163-195 (GCTR…GTCQ), 208-243 (ACEP…KVCA), 245-280 (KCSQ…NRCI), and 282-315 (YCAA…NVCV). Intrachain disulfides connect C98–C107, C102–C113, C115–C127, C131–C140, C135–C145, C147–C160, C164–C174, C168–C180, C182–C194, C213–C222, C217–C228, C230–C242, C246–C255, C250–C261, C263–C279, C283–C292, C287–C298, and C300–C314.

It is found in the secreted. In terms of biological role, binds to lipopolysaccharides (LPS) present on the cell walls of Gram-negative bacteria, behaving as a pattern recognition receptor (PRR). Induces bacterial aggregation and enhances their subsequent clearance by the innate immune response. Binds to the inner core oligosaccharides region of rough-type bacterial LPS. Displays activity against the Gram-negative bacterium E.coli. Does not display any activity against the Gram-positive bacterium S.aureus or the fungi C.albicans. This is Epidermal growth factor-like protein from Holotrichia diomphalia (Korean black chafer).